Consider the following 274-residue polypeptide: Orotidine 5'-phosphate decarboxylase (274 aa).

Lysine 95 functions as the Proton donor in the catalytic mechanism.

The protein belongs to the OMP decarboxylase family. Type 2 subfamily.

The catalysed reaction is orotidine 5'-phosphate + H(+) = UMP + CO2. It participates in pyrimidine metabolism; UMP biosynthesis via de novo pathway; UMP from orotate: step 2/2. The protein is Orotidine 5'-phosphate decarboxylase of Mycobacterium avium (strain 104).